A 1713-amino-acid chain; its full sequence is MFNRFNKLQAALALVLYSQSALGQYYTSSSIASNSSTAVSSTSSGSVSISSSIELTSSTSDVSSSLTELTSSFTEVSSSIAPSTSSSEVSSSITSSGSSVSGSSSITSSGSSVSSSSPYDERFNSLDLSVHVSAGFSAGVSVGLEPSATTASVTTTLSPYDERVNLIELGVYVSDMRAHLVEYLLFQAAHSTEPHPTEIAAAFLDHGDFTTRLTGISGDEVTRMITGVPWYSTRLKPAISEALAKDGIYTAIPTSTSTTSDTYISSSSPSQVTSSAEPTTVSGVTSSVEPTRSSQVTSSAEPTTVSEITSSAEPLSSSKATTSAESISSNQITISSELIVSSVITSSSEIPSSIEVLTSSGISSSVEPTSLVGPSSDESISSTESLSATSTPLAVSSTVVTSSTDSVSPNIPFSEISSSPESSTAITSGSSSATESGSSVSGSTSATESGSSASGSSSATESGSSVSGSTSATESGSASSVPSSSGSVTESGSSSSASESSITQSGTASGSSVSSTSGSVTQSGSSVSGSSASSAPGISSSIPQSTSSASTASGSITSGTLTSITSGSSSATESGSSVSGSSSATESGSSVSGSTSATESGSSVSGSTSATESGSSASGSSSATESGSSVSGSTSATESGSSVSGSTSATESGSSASGSSSATESGSASSVPSSSGSVTESGSSSSASESSITQSGTASGSSASSTSGSVTQSGSSVSGSSASSAPGISSSIPQSTSSASTASGSITSGTLTSITSGSSSATESGSSASGSSSATESGSSVSGSTSATESGSSVSGSTSATESGSSASGSSSATESGSSVSGSTSATESGSSASGSSSATESGSASSVPSSSGSVTESGSSSSASESSITQSGTASGSSASSTSGSVTQSGSSVSGSSASSTSGSVTQSGSSVSGSSASSAPGISSSIPQSTSSASTASGSITSGTLTSITSSASSASATASNSLSSSDGTIYLPTTTISGDLTLTGKVIATEGVVVAAGAKLTLLDGDKYSFSADLKVYGDLLVKKSKETYPGTEFDISGENFDVTGNFNAEESAATSASIYSFTPSSFDNSGDISLSLSKSKKGEVTFSPYSNSGAFSFSNAILNGGSVSGLQRRDDTEGSVNNGEINLDNGSTYVIVEPVSGKGTVNIISGNLYLHYPDTFTGQTVVFKGEGVLAVDPTESNTTPIPVVGYTGENQIAITADVTALSYDSATGVLTATQGNSQFSFSIGTGFSSSGFNVSEGTFAGAYAYYLNYGGVVASSATPSSTSTTSGATNSTSGSTSFGASVTGSTASTSFGASVTGSTASTLISGSPSVYTTTLTYATTTSTVVVSCSETTDSNGNVYTITTTVPCSSTTATITSCDETGCHVTTSTGTVATETVSSKSYTTVTVTHCDNNGCNTKTVTSEAPEATTTTVSPKTYTTATVTQCDDNGCSTKTVTSECPEETSATTTSPKSYTTVTVTHCDDNGCNTKTVTSEAPEATTTTVSPKTYTTATVTQCDDNGCSTKTVTSECPEETSATTTSPKSYTTVTVTHCDDNGCNTKTVTSEAPEATTTTVSPKTYTTATVTQCDDNGCSTKTVTSEAPKETSETSETSAAPKTYTTATVTQCDDNGCNVKIITSQIPEATSTVTATSASPKSYTTVTSEGSKATSLTTAISKASSAISTYSKSAAPIKTSTGIIVQSEGIAAGLNANTLNALVGIFVLAFFN.

The first 23 residues, 1–23 (MFNRFNKLQAALALVLYSQSALG), serve as a signal peptide directing secretion. N-linked (GlcNAc...) asparagine glycosylation is present at asparagine 34. Disordered regions lie at residues 80–117 (IAPSTSSSEVSSSITSSGSSVSGSSSITSSGSSVSSSS), 256–327 (TSTT…AESI), and 359–939 (SSGI…STAS). The span at 256–275 (TSTTSDTYISSSSPSQVTSS) shows a compositional bias: low complexity. 2 stretches are compositionally biased toward polar residues: residues 276-327 (AEPT…AESI) and 359-368 (SSGISSSVEP). A compositionally biased stretch (low complexity) spans 374–939 (PSSDESISST…QSTSSASTAS (566 aa)). N-linked (GlcNAc...) asparagine glycosylation is found at asparagine 1133, asparagine 1241, and asparagine 1278. Residues 1582 to 1603 (KTVTSEAPKETSETSETSAAPK) are disordered. Alanine 1692 carries GPI-anchor amidated alanine lipidation. Positions 1693 to 1713 (AGLNANTLNALVGIFVLAFFN) are cleaved as a propeptide — removed in mature form.

The protein belongs to the SRP1/TIP1 family. In terms of processing, the GPI-anchor is attached to the protein in the endoplasmic reticulum and serves to target the protein to the cell surface. There, the glucosamine-inositol phospholipid moiety is cleaved off and the GPI-modified mannoprotein is covalently attached via its lipidless GPI glycan remnant to the 1,6-beta-glucan of the outer cell wall layer.

Its subcellular location is the secreted. The protein resides in the cell wall. The protein localises to the membrane. Involved in cell wall organization and biosynthesis. Confers cell surface hydrophobicity (CSH). The sequence is that of Cell wall protein AWA1 (AWA1) from Saccharomyces cerevisiae (strain Kyokai no. 7 / NBRC 101557) (Baker's yeast).